A 325-amino-acid chain; its full sequence is Intelectin-2 (325 aa).

The N-terminal stretch at 1-26 is a signal peptide; the sequence is MLSMLRTMTRLCFLLFFSVATSGCSA. Residues 44–267 form the Fibrinogen C-terminal domain; it reads FSFSSLPRSC…AANALCAGIK (224 aa). Residues cysteine 53 and cysteine 82 are joined by a disulfide bond. Positions 98, 99, 101, 104, 109, 110, and 145 each coordinate Ca(2+). Cystine bridges form between cysteine 106-cysteine 292, cysteine 211-cysteine 271, and cysteine 263-cysteine 277. Ca(2+) is bound by residues asparagine 272, glutamate 274, and aspartate 294. 274-275 contacts a carbohydrate; it reads EH.

Expressed only in the small intestine.

The protein localises to the secreted. May play a role in the defense system against pathogens. In Homo sapiens (Human), this protein is Intelectin-2 (ITLN2).